A 361-amino-acid chain; its full sequence is Carbon monoxide-induced hydrogenase (361 aa).

The Ni(2+) site is built by C64, C67, C355, and C358.

This sequence to E.coli formate hydrogenlyase hydrogenase isozyme 3 and to bovine mitochondrial NADH-ubiquinone oxidoreductase. Ni(2+) is required as a cofactor.

The carbon monoxide dehydrogenase (CODH) oxidizes carbon monoxide coupled, via CooF, to the reduction of a hydrogen cation by a hydrogenase (probably CooH). The polypeptide is Carbon monoxide-induced hydrogenase (cooH) (Rhodospirillum rubrum).